The following is a 160-amino-acid chain: MQDADTQTTIFGNTVAELVGENLRIGIVQARFNAALTDRLAQACLVELELLGVSAKHIEHVSVPGALEIPIALQAMARRKDFDALIALGCIIRGETYHFELVSNESGAGVTRVSLDHATPIANAILTVENEDQAWARVDDKGRDAARVAVEMVNLMEELS.

5-amino-6-(D-ribitylamino)uracil is bound by residues F32, 66–68 (ALE), and 90–92 (CII). 95-96 (ET) lines the (2S)-2-hydroxy-3-oxobutyl phosphate pocket. The Proton donor role is filled by H98. 5-amino-6-(D-ribitylamino)uracil is bound at residue N123. R137 is a (2S)-2-hydroxy-3-oxobutyl phosphate binding site.

Belongs to the DMRL synthase family.

The catalysed reaction is (2S)-2-hydroxy-3-oxobutyl phosphate + 5-amino-6-(D-ribitylamino)uracil = 6,7-dimethyl-8-(1-D-ribityl)lumazine + phosphate + 2 H2O + H(+). It participates in cofactor biosynthesis; riboflavin biosynthesis; riboflavin from 2-hydroxy-3-oxobutyl phosphate and 5-amino-6-(D-ribitylamino)uracil: step 1/2. Catalyzes the formation of 6,7-dimethyl-8-ribityllumazine by condensation of 5-amino-6-(D-ribitylamino)uracil with 3,4-dihydroxy-2-butanone 4-phosphate. This is the penultimate step in the biosynthesis of riboflavin. The sequence is that of 6,7-dimethyl-8-ribityllumazine synthase from Methylibium petroleiphilum (strain ATCC BAA-1232 / LMG 22953 / PM1).